Here is an 87-residue protein sequence, read N- to C-terminus: UPF0367 protein P9303_26451 (87 aa).

The protein belongs to the UPF0367 family.

The sequence is that of UPF0367 protein P9303_26451 from Prochlorococcus marinus (strain MIT 9303).